Here is a 146-residue protein sequence, read N- to C-terminus: Leghemoglobin 1 (146 aa).

Residues 2 to 146 enclose the Globin domain; it reads GFTAQQDALV…LAAAIKKAMS (145 aa). 2 positions are modified to phosphoserine; by CCAMK: Ser-13 and Ser-14. Tyr-30 carries the nitrated tyrosine modification. Phosphoserine; by CCAMK occurs at positions 45 and 55. Ser-45 contacts heme b. His-61 provides a ligand contact to O2. The heme b site is built by Lys-64, His-93, and Lys-96. Ser-123 carries the phosphoserine; by CCAMK modification. The residue at position 134 (Tyr-134) is a Nitrated tyrosine.

Belongs to the plant globin family. As to quaternary structure, monomer. Post-translationally, nitrated in effective nodules and particularly in hypoxic conditions; this mechanism may play a protective role in the symbiosis by buffering toxic peroxynitrite NO(2)(-). Nitration level decrease during nodule senescence. Phosphorylated by CCAMK at serine residues in a Ca(2+)-dependent manner; the phosphorylation at Ser-45 disrupts the molecular environment of its porphyrin ring oxygen binding pocket, thus leading to a reduced oxygen consumption and to the delivery of oxygen O(2) to symbiosomes. As to expression, specifically and strongly expressed in root nodules and at low levels in seedlings.

It is found in the cytoplasm. Its subcellular location is the cytosol. The protein localises to the nucleus. Functionally, leghemoglobin that reversibly binds oxygen O(2) through a pentacoordinated heme iron. In root nodules, facilitates the diffusion of oxygen to the bacteroids while preventing the bacterial nitrogenase from being inactivated by buffering dioxygen, nitric oxide and carbon monoxide, and promoting the formation of reactive oxygen species (ROS, e.g. H(2)O(2)). This role is essential for symbiotic nitrogen fixation (SNF). The polypeptide is Leghemoglobin 1 (Lotus japonicus (Lotus corniculatus var. japonicus)).